The sequence spans 203 residues: Recombination protein RecR (203 aa).

The C4-type zinc-finger motif lies at 56 to 71 (CEVCGNVSDADRCRIC). The Toprim domain occupies 79–179 (SLVCVVEEPK…TVTRIASGLP (101 aa)).

This sequence belongs to the RecR family.

In terms of biological role, may play a role in DNA repair. It seems to be involved in an RecBC-independent recombinational process of DNA repair. It may act with RecF and RecO. In Mycobacterium sp. (strain JLS), this protein is Recombination protein RecR.